A 418-amino-acid chain; its full sequence is MMKKTITLLTALLPLASAVAEEPTLSPEMVSASEVISTQENQTYTYVRCWYRTSYSKDDPATDWEWAKNEDGSYFTIDGYWWSSVSFKNMFYTNTSQNVIRQRCEATLDLANENADITFFAADNRFSYNHTIWSNDAAMQPDQINKVVALGDSLSDTGNIFNASQWRFPNPNSWFLGHFSNGFVWTEYIAKAKNLPLYNWAVGGAAGENQYIALTGVGEQVSSYLTYAKLAKNYKPANTLFTLEFGLNDFMNYNRGVPEVKADYAEALIRLTDAGAKNFMLMTLPDATKAPQFKYSTQEEIDKIRAKVLEMNEFIKAQAMYYKAQGYNITLFDTHALFETLTSAPEEHGFVNASDPCLDINRSSSVDYMYTHALRSECAASGAEKFVFWDVTHPTTATHRYVAEKMLESSNNLAEYRF.

The first 19 residues, 1-19 (MMKKTITLLTALLPLASAV), serve as a signal peptide directing secretion. The Nucleophile role is filled by serine 153. Catalysis depends on residues aspartate 390 and histidine 393.

This sequence belongs to the 'GDSL' lipolytic enzyme family. There are two forms of LDH. The LDH(S) may be a protein in which 13 residues of the N-terminal of LDH(L) are deleted.

Its subcellular location is the secreted. Functionally, phospholipase hydrolyzing both fatty acid esters of phospholipid, i.e. it hydrolyzes phosphatidylcholine (PC) to lysophosphatidylcholine (LPC) and then LPC to glycerophosphorylcholine (GPC). This chain is Thermolabile hemolysin, found in Vibrio parahaemolyticus serotype O3:K6 (strain RIMD 2210633).